The following is a 556-amino-acid chain: 2-isopropylmalate synthase (556 aa).

Positions 33 to 307 (PIWLSTDLRD…DPQLDFSDID (275 aa)) constitute a Pyruvate carboxyltransferase domain. Mg(2+) contacts are provided by Asp-42, His-246, His-248, and Asn-282. The interval 439 to 556 (ASAPYALKGH…ALSQAESRAA (118 aa)) is regulatory domain.

The protein belongs to the alpha-IPM synthase/homocitrate synthase family. LeuA type 2 subfamily. Homodimer. It depends on Mg(2+) as a cofactor.

It localises to the cytoplasm. The catalysed reaction is 3-methyl-2-oxobutanoate + acetyl-CoA + H2O = (2S)-2-isopropylmalate + CoA + H(+). It functions in the pathway amino-acid biosynthesis; L-leucine biosynthesis; L-leucine from 3-methyl-2-oxobutanoate: step 1/4. Catalyzes the condensation of the acetyl group of acetyl-CoA with 3-methyl-2-oxobutanoate (2-ketoisovalerate) to form 3-carboxy-3-hydroxy-4-methylpentanoate (2-isopropylmalate). In Ectopseudomonas mendocina (strain ymp) (Pseudomonas mendocina), this protein is 2-isopropylmalate synthase.